Here is a 390-residue protein sequence, read N- to C-terminus: MPVLTDPVQLLQALIRCPSITPNEAGALSILEQFLRKMGFSVERPIFSDKNTADVENLYAKMGNKGPHLMFAGHSDVVPPGELDNWMYPPFEGIINQGKIYGRGAVDMKGAIACFIAALARVLEKQPIKGAVSLLITGDEEGPAINGTVKLLKWAAQKGEKWNAAIVGEPTSVKRVGDMIKIGRRGSISGIITVKGRQGHVAFPERAANPLPLAHKLIQALTDTALDQGTKNFQASNLELTTIDTGNSATNIIPAQTVIRFNIRYNDLWTKEALIAEIEKRLALVHSENNSNQYPYYQLEWIQNLGSVFLIKNDHLIEILSNAIEIVTGKRPECSTSGGTSDARFIKDYCPVVEFGLPGNTMHMVDECVTLDAMESLTVIYERFIIDFFA.

His-74 contributes to the Zn(2+) binding site. Asp-76 is an active-site residue. Asp-107 is a binding site for Zn(2+). Glu-140 (proton acceptor) is an active-site residue. 3 residues coordinate Zn(2+): Glu-141, Glu-169, and His-363.

Belongs to the peptidase M20A family. DapE subfamily. Homodimer. Zn(2+) is required as a cofactor. The cofactor is Co(2+).

It catalyses the reaction N-succinyl-(2S,6S)-2,6-diaminopimelate + H2O = (2S,6S)-2,6-diaminopimelate + succinate. It functions in the pathway amino-acid biosynthesis; L-lysine biosynthesis via DAP pathway; LL-2,6-diaminopimelate from (S)-tetrahydrodipicolinate (succinylase route): step 3/3. Its function is as follows. Catalyzes the hydrolysis of N-succinyl-L,L-diaminopimelic acid (SDAP), forming succinate and LL-2,6-diaminopimelate (DAP), an intermediate involved in the bacterial biosynthesis of lysine and meso-diaminopimelic acid, an essential component of bacterial cell walls. This is Succinyl-diaminopimelate desuccinylase from Bartonella bacilliformis (strain ATCC 35685 / KC583 / Herrer 020/F12,63).